The sequence spans 131 residues: MAGEKNAVGSSKKKKYTGGVAKAYILSTFNNTIVNITDEKGNTLAWASAGVSGFKGTKKGTPFAAQMTAASVGRKVMGIGVKQIAIFIKGPGPGRETAIRGLQSSGLGITTIKDITPVPHDGCRPPKLRRV.

Belongs to the universal ribosomal protein uS11 family. In terms of assembly, part of the 30S ribosomal subunit. Interacts with proteins S7 and S18. Binds to IF-3.

In terms of biological role, located on the platform of the 30S subunit, it bridges several disparate RNA helices of the 16S rRNA. Forms part of the Shine-Dalgarno cleft in the 70S ribosome. In Endomicrobium trichonymphae, this protein is Small ribosomal subunit protein uS11.